The primary structure comprises 166 residues: Protein-export protein SecB (166 aa).

It belongs to the SecB family. Homotetramer, a dimer of dimers. One homotetramer interacts with 1 SecA dimer.

The protein resides in the cytoplasm. Functionally, one of the proteins required for the normal export of preproteins out of the cell cytoplasm. It is a molecular chaperone that binds to a subset of precursor proteins, maintaining them in a translocation-competent state. It also specifically binds to its receptor SecA. The chain is Protein-export protein SecB from Cereibacter sphaeroides (strain ATCC 17029 / ATH 2.4.9) (Rhodobacter sphaeroides).